The sequence spans 280 residues: MATYLIGDVHGCYDELIALLHKVEFTPGKDTLWLTGDLVARGPGSLDVLRYVKSLGDSVRLVLGNHDLHLLAVFAGISRNKPKDRLTPLLEAPDADELLNWLRRQPLLQIDEEKKLVMAHAGITPQWDLQTAKECARDVEAVLSSDSYPFFLDAMYGDMPNNWSPELRGLGRLRFITNAFTRMRFCFPNGQLDMYSKESPEEAPAPLKPWFAIPGPVAEEYSIAFGHWASLEGKGTPEGIYALDTGCCWGGTLTCLRWEDKQYFVQPSNRHKDLGEAAAS.

The protein belongs to the Ap4A hydrolase family.

It catalyses the reaction P(1),P(4)-bis(5'-adenosyl) tetraphosphate + H2O = 2 ADP + 2 H(+). Its function is as follows. Hydrolyzes diadenosine 5',5'''-P1,P4-tetraphosphate to yield ADP. In Shigella boydii serotype 18 (strain CDC 3083-94 / BS512), this protein is Bis(5'-nucleosyl)-tetraphosphatase, symmetrical.